Here is a 334-residue protein sequence, read N- to C-terminus: Stabilizer of axonemal microtubules 3 (334 aa).

Disordered stretches follow at residues 81 to 105 (AYVP…PTRT), 128 to 153 (YQSS…YFGP), and 233 to 260 (QVWS…RVPR). Polar residues predominate over residues 128-141 (YQSSETRAQYTGSP). A compositionally biased stretch (pro residues) spans 240-251 (QRPPCPRSSRPP).

In Homo sapiens (Human), this protein is Stabilizer of axonemal microtubules 3.